Consider the following 368-residue polypeptide: Aminomethyltransferase (368 aa).

The protein belongs to the GcvT family. The glycine cleavage system is composed of four proteins: P, T, L and H.

It carries out the reaction N(6)-[(R)-S(8)-aminomethyldihydrolipoyl]-L-lysyl-[protein] + (6S)-5,6,7,8-tetrahydrofolate = N(6)-[(R)-dihydrolipoyl]-L-lysyl-[protein] + (6R)-5,10-methylene-5,6,7,8-tetrahydrofolate + NH4(+). The glycine cleavage system catalyzes the degradation of glycine. The chain is Aminomethyltransferase from Thermoanaerobacter pseudethanolicus (strain ATCC 33223 / 39E) (Clostridium thermohydrosulfuricum).